Reading from the N-terminus, the 179-residue chain is Large ribosomal subunit protein bL25 (179 aa).

It belongs to the bacterial ribosomal protein bL25 family. CTC subfamily. As to quaternary structure, part of the 50S ribosomal subunit; part of the 5S rRNA/L5/L18/L25 subcomplex. Contacts the 5S rRNA. Binds to the 5S rRNA independently of L5 and L18.

Its function is as follows. This is one of the proteins that binds to the 5S RNA in the ribosome where it forms part of the central protuberance. The protein is Large ribosomal subunit protein bL25 of Desulfitobacterium hafniense (strain DSM 10664 / DCB-2).